Consider the following 191-residue polypeptide: Inosine triphosphate pyrophosphatase (191 aa).

9–14 (TGNAKK) is an ITP binding site. Glutamate 39 is a binding site for Mg(2+). Residues lysine 51, 67–68 (DT), lysine 84, 143–146 (FGWD), lysine 166, and 171–172 (HR) contribute to the ITP site.

This sequence belongs to the HAM1 NTPase family. As to quaternary structure, homodimer. Mg(2+) is required as a cofactor. Requires Mn(2+) as cofactor.

The protein localises to the cytoplasm. The enzyme catalyses ITP + H2O = IMP + diphosphate + H(+). The catalysed reaction is dITP + H2O = dIMP + diphosphate + H(+). It carries out the reaction XTP + H2O = XMP + diphosphate + H(+). Functionally, pyrophosphatase that hydrolyzes non-canonical purine nucleotides such as inosine triphosphate (ITP), deoxyinosine triphosphate (dITP) or xanthosine 5'-triphosphate (XTP) to their respective monophosphate derivatives. The enzyme does not distinguish between the deoxy- and ribose forms. Probably excludes non-canonical purines from RNA and DNA precursor pools, thus preventing their incorporation into RNA and DNA and avoiding chromosomal lesions. This chain is Inosine triphosphate pyrophosphatase, found in Drosophila melanogaster (Fruit fly).